The primary structure comprises 629 residues: Ribosomal protein S6 kinase 2 beta (629 aa).

Positions Phe62–Phe321 constitute a Protein kinase 1 domain. ATP is bound by residues Leu68–Val76 and Lys94. Asp187 acts as the Proton acceptor in catalysis. Ser221 carries the phosphoserine modification. An AGC-kinase C-terminal domain is found at Ser322–Ala391. The residue at position 359 (Thr359) is a Phosphothreonine. Ser363 bears the Phosphoserine mark. Ser380 bears the Phosphoserine; by autocatalysis mark. In terms of domain architecture, Protein kinase 2 spans Tyr416–Ser629. ATP contacts are provided by residues Ile422 to Cys430 and Lys445. The Proton acceptor role is filled by Asp533. Thr571 carries the phosphothreonine modification.

Belongs to the protein kinase superfamily. AGC Ser/Thr protein kinase family. S6 kinase subfamily. It depends on Mg(2+) as a cofactor. Post-translationally, autophosphorylated on Ser-380, as part of the activation process.

The enzyme catalyses L-seryl-[protein] + ATP = O-phospho-L-seryl-[protein] + ADP + H(+). The catalysed reaction is L-threonyl-[protein] + ATP = O-phospho-L-threonyl-[protein] + ADP + H(+). Activated by multiple phosphorylations on threonine and serine residues. Functionally, serine/threonine kinase that may play a role in mediating the growth-factor and stress induced activation of transcription. The sequence is that of Ribosomal protein S6 kinase 2 beta from Xenopus laevis (African clawed frog).